Reading from the N-terminus, the 105-residue chain is MEKIYSKGVVLGYRRSQATQYPNISLIKIEGVVSREDSTFYLGKKVCLVSKVSKSAKNPTGHKISWGKICKTHGSSGVVQARFARNLPPKAMGAPVRVMLYPSNI.

It belongs to the eukaryotic ribosomal protein eL33 family.

Functionally, the protein was found to bind to both initiator and elongator tRNAs and consequently was assigned to the P site or P and A site. This chain is Large ribosomal subunit protein eL33 (rpl35a), found in Dictyostelium discoideum (Social amoeba).